The chain runs to 199 residues: Holliday junction branch migration complex subunit RuvA (199 aa).

The tract at residues 1–63 is domain I; it reads MIAYIEGKLA…EDAHTLFGFA (63 aa). The domain II stretch occupies residues 64–142; the sequence is DLMEKEMFLH…KDALLAGSDS (79 aa). A flexible linker region spans residues 143–151; it reads KQNFSVSHN. The segment at 151–199 is domain III; it reads NSIRSEALTALITLGFTKTVAEKNLDLILKGNSNSFTLEDLIKQALKMS.

Belongs to the RuvA family. In terms of assembly, homotetramer. Forms an RuvA(8)-RuvB(12)-Holliday junction (HJ) complex. HJ DNA is sandwiched between 2 RuvA tetramers; dsDNA enters through RuvA and exits via RuvB. An RuvB hexamer assembles on each DNA strand where it exits the tetramer. Each RuvB hexamer is contacted by two RuvA subunits (via domain III) on 2 adjacent RuvB subunits; this complex drives branch migration. In the full resolvosome a probable DNA-RuvA(4)-RuvB(12)-RuvC(2) complex forms which resolves the HJ.

The protein resides in the cytoplasm. In terms of biological role, the RuvA-RuvB-RuvC complex processes Holliday junction (HJ) DNA during genetic recombination and DNA repair, while the RuvA-RuvB complex plays an important role in the rescue of blocked DNA replication forks via replication fork reversal (RFR). RuvA specifically binds to HJ cruciform DNA, conferring on it an open structure. The RuvB hexamer acts as an ATP-dependent pump, pulling dsDNA into and through the RuvAB complex. HJ branch migration allows RuvC to scan DNA until it finds its consensus sequence, where it cleaves and resolves the cruciform DNA. The polypeptide is Holliday junction branch migration complex subunit RuvA (Cytophaga hutchinsonii (strain ATCC 33406 / DSM 1761 / CIP 103989 / NBRC 15051 / NCIMB 9469 / D465)).